Here is a 465-residue protein sequence, read N- to C-terminus: Mothers against decapentaplegic homolog 5 (465 aa).

In terms of domain architecture, MH1 spans 13–137; it reads PAVKRLLGWK…YKRVESPVLP (125 aa). Residues C65, C110, C122, and H127 each coordinate Zn(2+). The segment at 163 to 242 is disordered; that stretch reads NEPHMPHNAT…MGQDNSQSMD (80 aa). The segment covering 173–183 has biased composition (polar residues); that stretch reads FPDSFQQPNST. The segment covering 198–214 has biased composition (low complexity); the sequence is ASSTYPSSPASSGPSSP. The MH2 domain occupies 271–465; that stretch reads WCSIVYYELN…SPLNPISSVS (195 aa).

The protein belongs to the dwarfin/SMAD family. May form trimers with the co-SMAD SMAD4.

The protein resides in the cytoplasm. It localises to the nucleus. Its function is as follows. Transcriptional modulator activated by BMP (bone morphogenetic proteins) type 1 receptor kinase. SMAD5 is a receptor-regulated SMAD (R-SMAD). The protein is Mothers against decapentaplegic homolog 5 (SMAD5) of Gallus gallus (Chicken).